A 220-amino-acid chain; its full sequence is Cytidylate kinase (220 aa).

Residue Gly-10–Thr-18 coordinates ATP.

This sequence belongs to the cytidylate kinase family. Type 1 subfamily.

The protein localises to the cytoplasm. The enzyme catalyses CMP + ATP = CDP + ADP. It catalyses the reaction dCMP + ATP = dCDP + ADP. In Alkaliphilus metalliredigens (strain QYMF), this protein is Cytidylate kinase.